Consider the following 583-residue polypeptide: Moesin/ezrin/radixin homolog 1 (583 aa).

An FERM domain is found at Met11–Arg301. Disordered stretches follow at residues Thr466–Ala518 and Arg539–Gly558. The segment covering Glu476–Leu485 has biased composition (acidic residues). A compositionally biased stretch (basic and acidic residues) spans Asp496–Ala518. Thr564 carries the post-translational modification Phosphothreonine.

As to quaternary structure, interacts with cytoskeletal actin.

It is found in the cell junction. Its subcellular location is the adherens junction. The protein resides in the cell projection. The protein localises to the microvillus. It localises to the rhabdomere. It is found in the cell membrane. Its subcellular location is the cytoplasm. The protein resides in the cytoskeleton. In terms of biological role, involved in connections of major cytoskeletal structures to the plasma membrane. This chain is Moesin/ezrin/radixin homolog 1, found in Aedes aegypti (Yellowfever mosquito).